The primary structure comprises 367 residues: Flagellin 2 (367 aa).

This sequence belongs to the bacterial flagellin family.

Its subcellular location is the secreted. It localises to the bacterial flagellum. In terms of biological role, flagellin is the subunit protein which polymerizes to form the filaments of bacterial flagella. This Proteus mirabilis protein is Flagellin 2 (fliC2).